A 494-amino-acid chain; its full sequence is Homeotic protein bicoid (494 aa).

Disordered stretches follow at residues 1 to 49 (MAQP…PPQF), 149 to 210 (RRRH…TAHM), and 263 to 293 (QQVH…AQQQ). Residues 14–40 (PLPHTHTHPHPHSHPHPHSHPHPHHQH) are compositionally biased toward basic residues. The homeobox DNA-binding region spans 97–156 (PRRTRTTFTSSQIAELEQHFLQGRYLTAPRLADLSAKLALGTAQVKIWFKNRRRRHKIQS). Residues 154-163 (IQSDQHKDQS) show a composition bias toward basic and acidic residues. The segment at 433 to 440 (RGAAFAKF) is RNA-binding.

This sequence belongs to the paired homeobox family. Bicoid subfamily. In terms of assembly, interacts with Bin1; in vitro and yeast cells. Interacts with bin3. Maternal expression is an anterior cap concentrated in the cortical cytoplasm. Its transcript is produced maternally and sequestered near the anterior pole of the mature oocyte. After egg deposition, it is translated into protein, which diffuses toward the posterior, forming a long-range anterior gradient.

Its subcellular location is the nucleus. Its function is as follows. Segment polarity transcription factor that provides positional cues for the development of head and thoracic segments. Forms a protein concentration gradient that patterns the anterior-posterior axis during embryogenesis and promotes the expression of anterior gap genes, such as hunchback (hb), ocelliless (oc), and buttonhead (btd). Binds to regulatory DNA sequences containing a 5'-TAATCC-3' sequence motif. Also binds RNA. Interacts with Bin1 to repress transcription of bicoid target genes in the anterior tip of the embryo; a process known as retraction. This is Homeotic protein bicoid from Drosophila melanogaster (Fruit fly).